Reading from the N-terminus, the 472-residue chain is Flap endonuclease 1 (472 aa).

The tract at residues 1-106 (MGIKGLARFL…EELMKRKERR (106 aa)) is N-domain. Aspartate 34 contributes to the Mg(2+) binding site. 2 residues coordinate DNA: arginine 47 and arginine 72. Mg(2+)-binding residues include aspartate 88, glutamate 160, glutamate 162, aspartate 181, and aspartate 183. The segment at 124–263 (TIRKQLIRTI…LTAYKLLKKH (140 aa)) is I-domain. Residue glutamate 160 participates in DNA binding. Glycine 241 and aspartate 243 together coordinate DNA. Residue aspartate 243 participates in Mg(2+) binding. The segment at 348–356 (AQTSLDSFF) is interaction with PCNA.

Belongs to the XPG/RAD2 endonuclease family. FEN1 subfamily. In terms of assembly, interacts with PCNA. Three molecules of FEN1 bind to one PCNA trimer with each molecule binding to one PCNA monomer. PCNA stimulates the nuclease activity without altering cleavage specificity. It depends on Mg(2+) as a cofactor. In terms of processing, phosphorylated. Phosphorylation upon DNA damage induces relocalization to the nuclear plasma.

The protein localises to the nucleus. The protein resides in the nucleolus. It is found in the nucleoplasm. It localises to the mitochondrion. Functionally, structure-specific nuclease with 5'-flap endonuclease and 5'-3' exonuclease activities involved in DNA replication and repair. During DNA replication, cleaves the 5'-overhanging flap structure that is generated by displacement synthesis when DNA polymerase encounters the 5'-end of a downstream Okazaki fragment. It enters the flap from the 5'-end and then tracks to cleave the flap base, leaving a nick for ligation. Also involved in the long patch base excision repair (LP-BER) pathway, by cleaving within the apurinic/apyrimidinic (AP) site-terminated flap. Acts as a genome stabilization factor that prevents flaps from equilibrating into structures that lead to duplications and deletions. Also possesses 5'-3' exonuclease activity on nicked or gapped double-stranded DNA, and exhibits RNase H activity. Also involved in replication and repair of rDNA and in repairing mitochondrial DNA. The protein is Flap endonuclease 1 of Cryptosporidium muris (strain RN66).